The sequence spans 341 residues: MHSTKVTYPEPMQLSGILDQYESFQVTPCIGTEFPKANLAEWLHSPNADALLRDLAITIAQRGVVFFRAQTDLDGELQKELTHRLGVQSGKPAGHRLSKHPLHLIRKDDPEMGVLDPGRQQKLHGVENTQKRQRAVLEYHSDGSYEVCPPDFTMLRMTEIPPTGGDTLWASGYELYDRLSTPYQKFFESLTAQHEVPSLRKLAETEPGIYDGPRGAPANTDMQFKQSHPMVRTHPVTGWKTLFAGGLHCRRVNDVTDFESEQLLSKIISLVGDNHDLQVRFRWNNPGDVAIWDNRCVLHCPTQDHYGLGGRMGYRTMGIAEKPYLDPNSPSRQEALAAAAK.

His100 lines the substrate pocket. Fe cation-binding residues include His140 and Asp142. Thr167 is a binding site for 2-oxoglutarate. Residue His299 participates in Fe cation binding. The 2-oxoglutarate site is built by Arg311 and Arg315. Arg315 lines the substrate pocket.

It belongs to the TfdA dioxygenase family. Requires Fe(2+) as cofactor.

Its pathway is secondary metabolite biosynthesis. In terms of biological role, alpha-ketoglutarate-dependent dioxygenase; part of the gene cluster that mediates the biosynthesis of oryzines, natural products with an unusual maleidride backbone. The two subunits of the fungal fatty acid synthase oryfasA and oryfasB probably form octenoic acid. This fatty acid is most likely activated by the acyl-CoA ligase oryP to give octenyl-CoA before the citrate synthase-like protein oryE catalyzes condensation with oxaloacetate to form tricarboxylic acid. The next steps of the pathways are conjectural, but a favorite possible route has been proposed, beginning with decarboxylation and concomitant dehydration by the decarboxylase oryM, followed by tautomerization, which may lead to the production of a diene intermediate. Reduction of this diene intermediate could give the known metabolite piliformic acid. On the pathway to oryzine B and oryzine A, however, hydroxylation of the diene by the alpha-ketoglutarate-dependent dioxygenase oryG and lactonisation by the lactonohydrolases oryH or oryL could give oryzine B directly. Finally, enoyl reduction by the dehydrogenase oryD would then convert oryzine B into oryzine A. The protein is Alpha-ketoglutarate-dependent dioxygenase oryG of Aspergillus oryzae (strain ATCC 42149 / RIB 40) (Yellow koji mold).